We begin with the raw amino-acid sequence, 260 residues long: Dolichol-phosphate mannosyltransferase subunit 1 (260 aa).

Residues 1–25 form a disordered region; the sequence is MASTGASRSLAASPRPPQGRSSRQD. An N-acetylalanine modification is found at Ala-2. Ser-3 and Ser-9 each carry phosphoserine. GDP-alpha-D-mannose is bound by residues Pro-32, Tyr-34, Glu-36, Ile-63, Asp-65, Asp-118, Ala-119, Asp-120, Arg-147, Arg-234, and Lys-240. Asp-120 lines the Mg(2+) pocket. Asp-120 is a Mn(2+) binding site.

Belongs to the glycosyltransferase 2 family. As to quaternary structure, component of the dolichol-phosphate mannose (DPM) synthase complex composed of DPM1, DPM2 and DPM3; within the complex, directly interacts with DPM3. This interaction may stabilize DPM1. Requires Mg(2+) as cofactor. Mn(2+) is required as a cofactor. Ca(2+) serves as cofactor.

It localises to the endoplasmic reticulum. It carries out the reaction a di-trans,poly-cis-dolichyl phosphate + GDP-alpha-D-mannose = a di-trans,poly-cis-dolichyl beta-D-mannosyl phosphate + GDP. Its pathway is protein modification; protein glycosylation. In terms of biological role, transfers mannose from GDP-mannose to dolichol monophosphate to form dolichol phosphate mannose (Dol-P-Man) which is the mannosyl donor in pathways leading to N-glycosylation, glycosyl phosphatidylinositol membrane anchoring, and O-mannosylation of proteins; catalytic subunit of the dolichol-phosphate mannose (DPM) synthase complex. This Mus musculus (Mouse) protein is Dolichol-phosphate mannosyltransferase subunit 1 (Dpm1).